The following is a 607-amino-acid chain: Phosphatidylinositol 4-kinase LSB6 (607 aa).

The segment covering asparagine 73–asparagine 88 has biased composition (polar residues). The tract at residues asparagine 73–leucine 93 is disordered. Residues glycine 161–isoleucine 522 form the PI3K/PI4K catalytic domain. The tract at residues isoleucine 167–glycine 173 is G-loop. Residues lysine 318–asparagine 356 form a disordered region. Over residues serine 319–threonine 330 the composition is skewed to basic and acidic residues. Positions serine 341–threonine 351 are enriched in polar residues. Positions arginine 384–asparagine 392 are catalytic loop. Residues alanine 411–tyrosine 431 form an activation loop region.

It belongs to the PI3/PI4-kinase family. In terms of assembly, interacts with LAS17. The cofactor is Mg(2+). Requires Mn(2+) as cofactor.

It is found in the cell membrane. It localises to the vacuole membrane. It catalyses the reaction a 1,2-diacyl-sn-glycero-3-phospho-(1D-myo-inositol) + ATP = a 1,2-diacyl-sn-glycero-3-phospho-(1D-myo-inositol 4-phosphate) + ADP + H(+). In terms of biological role, may play a role in endocytic and/or exocytic pathways. The sequence is that of Phosphatidylinositol 4-kinase LSB6 (LSB6) from Saccharomyces cerevisiae (strain ATCC 204508 / S288c) (Baker's yeast).